Here is a 438-residue protein sequence, read N- to C-terminus: ATP-dependent RNA helicase sub2 (438 aa).

Low complexity predominate over residues Thr-23–Thr-36. The disordered stretch occupies residues Thr-23–Thr-42. The Q motif signature appears at Thr-58–Ile-86. The 176-residue stretch at Ile-86 to Val-261 folds into the Helicase ATP-binding domain. Residue Ala-99 to Thr-106 participates in ATP binding. The short motif at Asp-208–Asp-211 is the DEAD box element. The 146-residue stretch at Lys-289–Ser-434 folds into the Helicase C-terminal domain.

It belongs to the DEAD box helicase family. DECD subfamily.

It localises to the nucleus. The catalysed reaction is ATP + H2O = ADP + phosphate + H(+). ATP-binding RNA helicase involved in transcription elongation and required for the export of mRNA out of the nucleus. SUB2 also plays a role in pre-mRNA splicing and spliceosome assembly. May be involved in rDNA and telomeric silencing, and maintenance of genome integrity. The polypeptide is ATP-dependent RNA helicase sub2 (sub2) (Aspergillus terreus (strain NIH 2624 / FGSC A1156)).